The chain runs to 142 residues: Mitochondrial import receptor subunit TOM22 homolog (142 aa).

The segment covering 1–11 (MAAAVAAAGAG) has biased composition (low complexity). The tract at residues 1–42 (MAAAVAAAGAGEPQSPDELLPKGDAEKPEEELEEDDDEELDE) is disordered. An N-acetylalanine modification is found at A2. Residues 2 to 83 (AAAVAAAGAG…AQKMYRFSRA (82 aa)) are Cytoplasmic-facing. The residue at position 15 (S15) is a Phosphoserine. A compositionally biased stretch (acidic residues) spans 27 to 42 (KPEEELEEDDDEELDE). The interval 41–50 (DETLSERLWG) is import sequence; necessary for mitochondrion outer membrane localization and integration in the TOM complex. A Phosphothreonine modification is found at T43. Residue S45 is modified to Phosphoserine. The TMD; necessary for mitochondrion outer membrane localization and integration in the TOM complex stretch occupies residues 83–103 (AALWIGTTSFMILVLPVVFET). Residues 84 to 103 (ALWIGTTSFMILVLPVVFET) form a helical membrane-spanning segment. The Mitochondrial intermembrane portion of the chain corresponds to 104 to 142 (EKLQMEQQQQLQQRQILLGPNTGLSGGMPGALPSLPGKI). The tract at residues 123 to 142 (PNTGLSGGMPGALPSLPGKI) is C-tail signal; necessary for mitochondrion outer membrane localization and integration in the TOM complex.

Belongs to the Tom22 family. As to quaternary structure, forms part of the preprotein translocase complex of the outer mitochondrial membrane (TOM complex) which consists of at least 7 different proteins (TOMM5, TOMM6, TOMM7, TOMM20, TOMM22, TOMM40 and TOMM70). Interacts with TOMM40. Interacts with PPP2R2B. As to expression, ubiquitous.

The protein localises to the mitochondrion outer membrane. Central receptor component of the translocase of the outer membrane of mitochondria (TOM complex) responsible for the recognition and translocation of cytosolically synthesized mitochondrial preproteins. Together with the peripheral receptor TOM20 functions as the transit peptide receptor and facilitates the movement of preproteins into the translocation pore. Required for the translocation across the mitochondrial outer membrane of cytochrome P450 monooxygenases. The polypeptide is Mitochondrial import receptor subunit TOM22 homolog (TOMM22) (Homo sapiens (Human)).